Consider the following 422-residue polypeptide: Protein king tubby 2 (422 aa).

The segment at Pro-49–Asp-169 is disordered. The segment covering Ser-57–Pro-81 has biased composition (low complexity).

This sequence belongs to the TUB family.

It is found in the cytoplasm. It localises to the nucleus. This chain is Protein king tubby 2 (king-tubby2), found in Culex quinquefasciatus (Southern house mosquito).